The sequence spans 100 residues: MAERFSSRLADVIRRPLITEKATRALEMNQYTFEVDPRAAKPDIKAAVEHLFDVKVIGVSTMNPPRRTRRVGRFAGRRSQVKKAVVRLAEGNSIQLFPES.

This sequence belongs to the universal ribosomal protein uL23 family. Part of the 50S ribosomal subunit. Contacts protein L29, and trigger factor when it is bound to the ribosome.

One of the early assembly proteins it binds 23S rRNA. One of the proteins that surrounds the polypeptide exit tunnel on the outside of the ribosome. Forms the main docking site for trigger factor binding to the ribosome. The protein is Large ribosomal subunit protein uL23 of Synechococcus sp. (strain RCC307).